A 299-amino-acid polypeptide reads, in one-letter code: tRNA pseudouridine synthase B (299 aa).

Asp-47 serves as the catalytic Nucleophile.

Belongs to the pseudouridine synthase TruB family. Type 1 subfamily.

It carries out the reaction uridine(55) in tRNA = pseudouridine(55) in tRNA. Functionally, responsible for synthesis of pseudouridine from uracil-55 in the psi GC loop of transfer RNAs. The sequence is that of tRNA pseudouridine synthase B from Dechloromonas aromatica (strain RCB).